We begin with the raw amino-acid sequence, 93 residues long: MANKKIDHREEAVELLKQDAKRILQLIKVQMDNLTLPQCPAYEEVLDTQMYGLSREINFATRLGLIEPEEGKKLMSTLEKELSTLHELSMSKK.

The protein belongs to the UPF0358 family.

This chain is UPF0358 protein lmo1070, found in Listeria monocytogenes serovar 1/2a (strain ATCC BAA-679 / EGD-e).